A 242-amino-acid chain; its full sequence is Biosynthetic peptidoglycan transglycosylase (242 aa).

The helical transmembrane segment at 19–39 (ILAALAVFWGGGIALFSVVPV) threads the bilayer.

It belongs to the glycosyltransferase 51 family.

It localises to the cell inner membrane. It carries out the reaction [GlcNAc-(1-&gt;4)-Mur2Ac(oyl-L-Ala-gamma-D-Glu-L-Lys-D-Ala-D-Ala)](n)-di-trans,octa-cis-undecaprenyl diphosphate + beta-D-GlcNAc-(1-&gt;4)-Mur2Ac(oyl-L-Ala-gamma-D-Glu-L-Lys-D-Ala-D-Ala)-di-trans,octa-cis-undecaprenyl diphosphate = [GlcNAc-(1-&gt;4)-Mur2Ac(oyl-L-Ala-gamma-D-Glu-L-Lys-D-Ala-D-Ala)](n+1)-di-trans,octa-cis-undecaprenyl diphosphate + di-trans,octa-cis-undecaprenyl diphosphate + H(+). It functions in the pathway cell wall biogenesis; peptidoglycan biosynthesis. Peptidoglycan polymerase that catalyzes glycan chain elongation from lipid-linked precursors. This chain is Biosynthetic peptidoglycan transglycosylase, found in Salmonella paratyphi A (strain ATCC 9150 / SARB42).